The chain runs to 610 residues: UvrABC system protein C (610 aa).

In terms of domain architecture, GIY-YIG spans 12-91; the sequence is TSPGVYLYKN…IKQKKPRFNI (80 aa). Residues 202–237 form the UVR domain; it reads SDLKQSLTARMNKAAEGMQFELAAKYRDLITTVEDL.

The protein belongs to the UvrC family. Interacts with UvrB in an incision complex.

The protein resides in the cytoplasm. In terms of biological role, the UvrABC repair system catalyzes the recognition and processing of DNA lesions. UvrC both incises the 5' and 3' sides of the lesion. The N-terminal half is responsible for the 3' incision and the C-terminal half is responsible for the 5' incision. In Koribacter versatilis (strain Ellin345), this protein is UvrABC system protein C.